We begin with the raw amino-acid sequence, 286 residues long: Aquaporin PIP2-4 (286 aa).

2 helical membrane passes run 40 to 60 (ALIA…ATVI) and 77 to 97 (CGGV…FILV). The short motif at 109–111 (NPA) is the NPA 1 element. 3 helical membrane passes run 128 to 148 (LLYM…VKGF), 170 to 190 (GTGL…VFSA), and 204 to 224 (VLAP…TIPI). The NPA 2 motif lies at 230 to 232 (NPA). Residues 252–272 (IFWVGPFIGAAIAALYHQVIL) form a helical membrane-spanning segment.

It belongs to the MIP/aquaporin (TC 1.A.8) family. PIP (TC 1.A.8.11) subfamily. Expressed in roots.

It localises to the cell membrane. Water channel required to facilitate the transport of water across cell membrane. May play a role in root water uptake. The sequence is that of Aquaporin PIP2-4 (PIP2-4) from Oryza sativa subsp. japonica (Rice).